The sequence spans 872 residues: Alanine--tRNA ligase (872 aa).

The Zn(2+) site is built by histidine 567, histidine 571, cysteine 669, and histidine 673.

It belongs to the class-II aminoacyl-tRNA synthetase family. Requires Zn(2+) as cofactor.

The protein resides in the cytoplasm. The enzyme catalyses tRNA(Ala) + L-alanine + ATP = L-alanyl-tRNA(Ala) + AMP + diphosphate. Functionally, catalyzes the attachment of alanine to tRNA(Ala) in a two-step reaction: alanine is first activated by ATP to form Ala-AMP and then transferred to the acceptor end of tRNA(Ala). Also edits incorrectly charged Ser-tRNA(Ala) and Gly-tRNA(Ala) via its editing domain. The sequence is that of Alanine--tRNA ligase from Streptococcus mutans serotype c (strain ATCC 700610 / UA159).